Reading from the N-terminus, the 607-residue chain is Autophagy-related protein 16-1 (607 aa).

The tract at residues 13-43 is interaction with ATG5; it reads WKRHISEQLRRRDRLQRQAFEEIILQYNKLL. Positions 78–230 form a coiled coil; the sequence is NDNQLQEMAQ…QKELAEAAKE (153 aa). Ser-139 carries the post-translational modification Phosphoserine; by CK2. Residues 207-230 form a WIPI2-binding region; the sequence is AENEKDSRRRQARLQKELAEAAKE. The segment at 230 to 242 is RB1CC1-binding; the sequence is EPLPVEQDDDIEV. Phosphoserine is present on residues Ser-269 and Ser-287. A Caspase cleavage motif is present at residues 296–299; the sequence is DNVD. 7 WD repeats span residues 320-359, 364-403, 406-445, 447-484, 486-525, 532-573, and 575-607; these read AHDGEVNAVQFSPGSRLLATGGMDRRVKLWEVFGEKCEFK, GSNAGITSIEFDSAGSYLLAASNDFASRIWTVDDYRLRHT, GHSGKVLSAKFLLDNARIVSGSHDRTLKLWDLRSKVCIKT, FAGSSCNDIVCTEQCVMSGHFDKKIRFWDIRSESIVRE, ELLGKITALDLNPERTELLSCSRDDLLKVIDLRTNAIKQT, KCGS…KVLS, and QHSSSINAVAWSPSGSHVVSVDKGCKAVLWAQY.

This sequence belongs to the WD repeat ATG16 family. As to quaternary structure, homodimer. Homooligomer. Heterooligomer with ATG16L2. Interacts with WIPI1. Interacts with WIPI2. Interacts with RB1CC1; the interaction is required for ULK1 complex-dependent autophagy. Interacts with ATG5. Part of the minor complex composed of 4 sets of ATG12-ATG5 and ATG16L1 (400 kDa); this complex interacts with ATG3 leading to disruption of ATG7 interaction and promotion of ATG8-like proteins lipidation. Part of the major complex composed of 8 sets of ATG12-ATG5 and ATG16L1 (800 kDa). Interacts with RAB33B (GTP- and GDP-bound forms); the complex consists of a tetramer where two RAB33B molecules bind independently one molecule of the ATG16L1 homodimer; the interaction promotes ATG12-ATG5-ATG16L1 complex recruitment to phagophores. Interacts (via WD repeats) with TMEM59; the interaction mediates unconventional autophagic activity of TMEM59. Interacts with TLR2. Interacts (via WD repeats) with MEFV. Interacts with PPP1CA; the interaction dephosphorylates ATG16L1 causing dissociation of ATG12-ATG5-ATG16L1 complex. Interacts (via N-terminal) with CLTC. Interacts with NOD1. Interacts with NOD2. Interacts with TUFM. Interacts with TRIM16. Interacts (via WD repeats) with SPATA33. Interacts with IRGM. Post-translationally, proteolytic cleavage by activated CASP3 leads to degradation and may regulate autophagy upon cellular stress and apoptotic stimuli. Phosphorylation at Ser-139 promotes association with the ATG12-ATG5 conjugate to form the ATG12-ATG5-ATG16L1 complex.

The protein localises to the cytoplasm. The protein resides in the preautophagosomal structure membrane. It localises to the endosome membrane. Its subcellular location is the lysosome membrane. Functionally, plays an essential role in both canonical and non-canonical autophagy: interacts with ATG12-ATG5 to mediate the lipidation to ATG8 family proteins (MAP1LC3A, MAP1LC3B, MAP1LC3C, GABARAPL1, GABARAPL2 and GABARAP). Acts as a molecular hub, coordinating autophagy pathways via distinct domains that support either canonical or non-canonical signaling. During canonical autophagy, interacts with ATG12-ATG5 to mediate the conjugation of phosphatidylethanolamine (PE) to ATG8 proteins, to produce a membrane-bound activated form of ATG8. Thereby, controls the elongation of the nascent autophagosomal membrane. As part of the ATG8 conjugation system with ATG5 and ATG12, required for recruitment of LRRK2 to stressed lysosomes and induction of LRRK2 kinase activity in response to lysosomal stress. Also involved in non-canonical autophagy, a parallel pathway involving conjugation of ATG8 proteins to single membranes at endolysosomal compartments, probably by catalyzing conjugation of phosphatidylserine (PS) to ATG8. Non-canonical autophagy plays a key role in epithelial cells to limit lethal infection by influenza A (IAV) virus. Regulates mitochondrial antiviral signaling (MAVS)-dependent type I interferon (IFN-I) production. Negatively regulates NOD1- and NOD2-driven inflammatory cytokine response. Instead, promotes an autophagy-dependent antibacterial pathway together with NOD1 or NOD2. Plays a role in regulating morphology and function of Paneth cell. In Homo sapiens (Human), this protein is Autophagy-related protein 16-1.